We begin with the raw amino-acid sequence, 59 residues long: Large ribosomal subunit protein uL30 (59 aa).

The protein belongs to the universal ribosomal protein uL30 family. In terms of assembly, part of the 50S ribosomal subunit.

In Psychrobacter cryohalolentis (strain ATCC BAA-1226 / DSM 17306 / VKM B-2378 / K5), this protein is Large ribosomal subunit protein uL30.